The chain runs to 97 residues: Aspartyl/glutamyl-tRNA(Asn/Gln) amidotransferase subunit C (97 aa).

This sequence belongs to the GatC family. As to quaternary structure, heterotrimer of A, B and C subunits.

The catalysed reaction is L-glutamyl-tRNA(Gln) + L-glutamine + ATP + H2O = L-glutaminyl-tRNA(Gln) + L-glutamate + ADP + phosphate + H(+). The enzyme catalyses L-aspartyl-tRNA(Asn) + L-glutamine + ATP + H2O = L-asparaginyl-tRNA(Asn) + L-glutamate + ADP + phosphate + 2 H(+). In terms of biological role, allows the formation of correctly charged Asn-tRNA(Asn) or Gln-tRNA(Gln) through the transamidation of misacylated Asp-tRNA(Asn) or Glu-tRNA(Gln) in organisms which lack either or both of asparaginyl-tRNA or glutaminyl-tRNA synthetases. The reaction takes place in the presence of glutamine and ATP through an activated phospho-Asp-tRNA(Asn) or phospho-Glu-tRNA(Gln). The sequence is that of Aspartyl/glutamyl-tRNA(Asn/Gln) amidotransferase subunit C from Synechococcus sp. (strain JA-2-3B'a(2-13)) (Cyanobacteria bacterium Yellowstone B-Prime).